Here is a 753-residue protein sequence, read N- to C-terminus: Rsm22-cox11 tandem protein 2, mitochondrial (753 aa).

The transit peptide at 1 to 39 (MPILTCRYKILFLYNLRNCFTFQNQRCLIPYGTTTTIRW) directs the protein to the mitochondrion. Residues Cys-323, Cys-329, Cys-342, and Cys-430 each coordinate [4Fe-4S] cluster. A helical transmembrane segment spans residues 571–591 (IYYLVAISIFALGLTYAAVPL). Topologically, residues 592 to 753 (YRLFCSKTGY…TNGNLLTKLN (162 aa)) are mitochondrial intermembrane.

The protein in the N-terminal section; belongs to the methyltransferase superfamily. Rsm22 family. This sequence in the C-terminal section; belongs to the COX11/CtaG family. In terms of assembly, associates with the mitochondrial ribosome (mitoribosome). Only transiently interacts with the mitoribosome. Post-translationally, specific enzymatic cleavages in vivo by mitochondrial processing peptidase (MPP) yield mature proteins including rsm22-2 and cox11-2.

The protein localises to the mitochondrion. It localises to the mitochondrion inner membrane. In terms of biological role, mitochondrial ribosome (mitoribosome) assembly factor. Binds at the interface of the head and body domains of the mitochondrial small ribosomal subunit (mt-SSU), occluding the mRNA channel and preventing compaction of the head domain towards the body. Probable inactive methyltransferase: retains the characteristic folding and ability to bind S-adenosyl-L-methionine, but it probably lost its methyltransferase activity. Exerts its effect at some terminal stage of cytochrome c oxidase synthesis, probably by being involved in the insertion of the copper B into subunit I. This is Rsm22-cox11 tandem protein 2, mitochondrial (cox1102) from Schizosaccharomyces pombe (strain 972 / ATCC 24843) (Fission yeast).